The chain runs to 246 residues: MTTDPSVKLKSAKDSLVSSLFELSKAANQTASSIVDFYNAIGDDEEEKIEAFTTLTESLQTLTSGVNHLHGISSELVNPIDDDKDAIIAAPVKAVRRKIERDPNAPKKPLTVFFAYSAYVRQELREDRQKAGLPPLSSTEITQEISKKWKELSDNEKEKWKQAYNVELENYQREKSKYLEAKKNGTLPPASLENGPTHAPVPIPFSLQHAAEPPVEKRPHDDDGSSEKKKKKKKKDKKKDKSNSSI.

The HMG box DNA-binding region spans 106–179 (PKKPLTVFFA…NYQREKSKYL (74 aa)). The tract at residues 179 to 246 (LEAKKNGTLP…KKKDKSNSSI (68 aa)) is disordered. Basic and acidic residues predominate over residues 214–227 (PVEKRPHDDDGSSE). A compositionally biased stretch (basic residues) spans 228–238 (KKKKKKKKDKK).

As to quaternary structure, interacts with FPR1. Interacts with an unidentified DNA helicase. Associates with rDNA.

The protein localises to the nucleus. It is found in the nucleolus. Functionally, DNA-binding protein that is probably part of the rDNA transcription apparatus. Acts synergetically with the RPA49 subunit of RNA polymerase I during rDNA transcription. May participate in mutagenesis control. In Saccharomyces cerevisiae (strain ATCC 204508 / S288c) (Baker's yeast), this protein is High mobility group protein 1 (HMO1).